The following is a 139-amino-acid chain: Self-incompatibility protein S1 (139 aa).

Residues 1–19 (MNIFYVIVLLSFFLSKSSG) form the signal peptide. An N-linked (GlcNAc...) asparagine glycan is attached at Asn51.

The protein belongs to the plant self-incompatibility (S1) protein family. Post-translationally, glycosylated (S1b) and unglocosylated (S1a) forms coexist. In terms of tissue distribution, accumulates in the stigma (at protein level).

Its subcellular location is the secreted. Exhibits specific pollen self-inhibitory activity thus preventing self-fertilization. This chain is Self-incompatibility protein S1, found in Papaver rhoeas (Common poppy).